A 208-amino-acid chain; its full sequence is Small ribosomal subunit protein uS4 (208 aa).

An S4 RNA-binding domain is found at 98–161 (RRLDNVVYRL…RKIPVLAEAQ (64 aa)).

This sequence belongs to the universal ribosomal protein uS4 family. As to quaternary structure, part of the 30S ribosomal subunit. Contacts protein S5. The interaction surface between S4 and S5 is involved in control of translational fidelity.

One of the primary rRNA binding proteins, it binds directly to 16S rRNA where it nucleates assembly of the body of the 30S subunit. Functionally, with S5 and S12 plays an important role in translational accuracy. This is Small ribosomal subunit protein uS4 from Desulfovibrio desulfuricans (strain ATCC 27774 / DSM 6949 / MB).